The chain runs to 128 residues: UPF0325 protein PMI2289 (128 aa).

It belongs to the UPF0325 family.

The sequence is that of UPF0325 protein PMI2289 from Proteus mirabilis (strain HI4320).